Consider the following 103-residue polypeptide: Pyrimidine/purine nucleoside phosphorylase (103 aa).

The protein belongs to the nucleoside phosphorylase PpnP family.

It catalyses the reaction a purine D-ribonucleoside + phosphate = a purine nucleobase + alpha-D-ribose 1-phosphate. The enzyme catalyses adenosine + phosphate = alpha-D-ribose 1-phosphate + adenine. The catalysed reaction is cytidine + phosphate = cytosine + alpha-D-ribose 1-phosphate. It carries out the reaction guanosine + phosphate = alpha-D-ribose 1-phosphate + guanine. It catalyses the reaction inosine + phosphate = alpha-D-ribose 1-phosphate + hypoxanthine. The enzyme catalyses thymidine + phosphate = 2-deoxy-alpha-D-ribose 1-phosphate + thymine. The catalysed reaction is uridine + phosphate = alpha-D-ribose 1-phosphate + uracil. It carries out the reaction xanthosine + phosphate = alpha-D-ribose 1-phosphate + xanthine. In terms of biological role, catalyzes the phosphorolysis of diverse nucleosides, yielding D-ribose 1-phosphate and the respective free bases. Can use uridine, adenosine, guanosine, cytidine, thymidine, inosine and xanthosine as substrates. Also catalyzes the reverse reactions. The sequence is that of Pyrimidine/purine nucleoside phosphorylase from Methylobacillus flagellatus (strain ATCC 51484 / DSM 6875 / VKM B-1610 / KT).